A 20-amino-acid polypeptide reads, in one-letter code: Punein (20 aa).

Residues 1-20 enclose the Barwin domain; the sequence is YHYYNPEENHFCATWDASKP.

In terms of processing, the N-terminus is blocked.

In Punica granatum (Pomegranate), this protein is Punein.